An 860-amino-acid polypeptide reads, in one-letter code: SH2 domain-containing protein 3C (860 aa).

The residue at position 22 (serine 22) is a Phosphoserine. Disordered regions lie at residues 51–117 (EATQ…PPGL) and 130–180 (PLED…PEAG). Residues 162 to 175 (ERPPRDVHSERAAG) show a composition bias toward basic and acidic residues. The SH2 domain maps to 220–319 (WYHGRIPREV…QSGAIIYCPV (100 aa)). Residues tyrosine 278 and tyrosine 283 each carry the phosphotyrosine modification. The interval 335–537 (GQGSSKPASP…LSENGAPEGD (203 aa)) is disordered. Serine 359 is modified (phosphoserine). Low complexity-rich tracts occupy residues 405 to 420 (SPMS…PAYS), 427 to 443 (AAPA…SPVA), and 479 to 490 (SPSPSLSSYSDP). Serine 440 carries the phosphoserine modification. The Ras-GEF domain occupies 586–854 (DARTLARHVT…TALSHKLEPA (269 aa)). Tyrosine 793 carries the post-translational modification Phosphotyrosine.

Component of a complex comprised of SH2D3C, BCAR1/CAS, and CRK. Within the complex, interacts with CRK and (via C-terminus) with BCAR1/CAS (via C-terminus). Interacts with NEDD9/HEF1. Interacts with EPHB2. As to quaternary structure, interacts with NEDD9/HEF1. Interacts with BCAR1/CAS. Interacts with PTK2B. In terms of assembly, interacts (via C-terminus) with BCAR1/CAS (via C-terminus). Interacts with IGF1. Phosphorylated by MAPK/ERK upon T-cell receptor stimulation in T-cells. In terms of tissue distribution, ubiquitously expressed.

The protein localises to the cytoplasm. It localises to the cell membrane. It is found in the cell projection. The protein resides in the axon. Its subcellular location is the ruffle membrane. In terms of biological role, acts as an adapter protein that mediates cell signaling pathways involved in cellular functions such as cell adhesion and migration, tissue organization, and the regulation of the immune response. Plays a role in integrin-mediated cell adhesion through BCAR1-CRK-RAPGEF1 signaling and activation of the small GTPase RAP1. Promotes cell migration and invasion through the extracellular matrix. Required for marginal zone B-cell development and thymus-independent type 2 immune responses. Mediates migration and adhesion of B cells in the splenic marginal zone via promoting hyperphosphorylation of NEDD9/CASL. Plays a role in CXCL13-induced chemotaxis of B-cells. Plays a role in the migration of olfactory sensory neurons (OSNs) into the forebrain and the innervation of the olfactory bulb by the OSN axons during development. Required for the efficient tyrosine phosphorylation of BCAR1 in OSN axons. Functionally, important regulator of chemokine-induced, integrin-mediated T lymphocyte adhesion and migration, acting upstream of RAP1. Required for tissue-specific adhesion of T lymphocytes to peripheral tissues. Required for basal and CXCL2 stimulated serine-threonine phosphorylation of NEDD9. May be involved in the regulation of T-cell receptor-mediated IL2 production through the activation of the JNK pathway in T-cells. Its function is as follows. May be involved in the BCAR1/CAS-mediated JNK activation pathway. In Homo sapiens (Human), this protein is SH2 domain-containing protein 3C (SH2D3C).